A 1030-amino-acid chain; its full sequence is Zinc finger and SCAN domain-containing protein 20 (1030 aa).

The segment at 22–42 (DSWGSDSRPEKESHSPVPGPE) is disordered. Positions 45–127 (RRCFRQFRYR…ALVEDWHREA (83 aa)) constitute an SCAN box domain. Disordered regions lie at residues 178–201 (DLSKMPPESLKESAVLTPQAPTVP), 213–285 (GKSQ…DSAQ), 411–441 (SGGPGEAVALPRLGDSDTEMDDQDEGSWEPE), and 578–600 (TGLPGSGQSSTEADDQEAWGEME). The segment covering 225-240 (AKKEPCQDPAGGDRGD) has biased composition (basic and acidic residues). 2 stretches are compositionally biased toward acidic residues: residues 426 to 441 (SDTEMDDQDEGSWEPE) and 589 to 600 (EADDQEAWGEME). The C2H2-type 1; degenerate zinc finger occupies 697–719 (YGCDTRAKSFSRKVHFFAPQRTH). The C2H2-type 2; degenerate zinc-finger motif lies at 725–747 (YKCLGSGKSFSDRANLSTHQRIH). C2H2-type zinc fingers lie at residues 753-775 (YRCLECGKSFNDPSNLITHQRTH) and 781-803 (YKCGLCWKSFNQSSNLLKHQRVH). Disordered regions lie at residues 801–820 (RVHLGGPPNQRDEPGENFGQ) and 828–850 (WRRNSTQEGPKEPQNISMGADSP). 6 C2H2-type zinc fingers span residues 862 to 884 (YSCPECGRCFSKSSALTSHQRIH), 890 to 912 (YECAVCGKSFSKSSSLANHRRTH), 918 to 940 (HKCADCGKCFSERSKLITHQRVH), 946 to 968 (YECPECGKFFRDRSNLITHQRIH), 974 to 996 (YKCRECGKCFNQSSSLIIHQRIH), and 1002 to 1024 (YKCTECGKDFNNSSHFSAHRRTH).

Belongs to the krueppel C2H2-type zinc-finger protein family.

It localises to the nucleus. In terms of biological role, may be involved in transcriptional regulation. The chain is Zinc finger and SCAN domain-containing protein 20 (Zscan20) from Mus musculus (Mouse).